The chain runs to 467 residues: Glutamate--tRNA ligase 2 (467 aa).

The 'HIGH' region signature appears at 18–28 (PSPTGYLHVGG). Residues 238–242 (PLSKR) carry the 'KMSKS' region motif. Lys241 contacts ATP.

This sequence belongs to the class-I aminoacyl-tRNA synthetase family. Glutamate--tRNA ligase type 1 subfamily. Monomer.

It is found in the cytoplasm. The catalysed reaction is tRNA(Glu) + L-glutamate + ATP = L-glutamyl-tRNA(Glu) + AMP + diphosphate. Functionally, catalyzes the attachment of glutamate to tRNA(Glu) in a two-step reaction: glutamate is first activated by ATP to form Glu-AMP and then transferred to the acceptor end of tRNA(Glu). This is Glutamate--tRNA ligase 2 from Fervidobacterium nodosum (strain ATCC 35602 / DSM 5306 / Rt17-B1).